Consider the following 522-residue polypeptide: Poly(A) polymerase (522 aa).

ATP is bound by residues 63 to 65 (YGS), 76 to 78 (DID), Asp130, Lys193, Tyr202, and 211 to 212 (GI). 3 residues coordinate Mg(2+): Asp76, Asp78, and Asp130. The tract at residues 475–522 (QLKAKEENSIPNEEKKEQLKKEMKQEANTIVKNSSTDDDFMKRFTRKN) is disordered. Positions 476-499 (LKAKEENSIPNEEKKEQLKKEMKQ) are enriched in basic and acidic residues.

The protein belongs to the poly(A) polymerase family. The cofactor is Mg(2+). It depends on Mn(2+) as a cofactor.

Its subcellular location is the cytoplasm. It is found in the nucleus. It carries out the reaction RNA(n) + ATP = RNA(n)-3'-adenine ribonucleotide + diphosphate. Its function is as follows. Polymerase that creates the 3'-poly(A) tail of mRNA's. May acquire specificity through interaction with a cleavage and polyadenylation factor. This Entamoeba histolytica (strain ATCC 30459 / HM-1:IMSS / ABRM) protein is Poly(A) polymerase.